A 165-amino-acid chain; its full sequence is Deoxyuridine 5'-triphosphate nucleotidohydrolase (165 aa).

It belongs to the dUTPase family. Homotrimer. Mg(2+) serves as cofactor.

It localises to the host cytoplasm. The protein resides in the virion. The enzyme catalyses dUTP + H2O = dUMP + diphosphate + H(+). In terms of biological role, the viral dUTPase may play a role in lowering the dUTP concentration in natural infections to minimize misincorporation of deoxyuridine into the viral DNA and ensure the fidelity of genome replication. This African swine fever virus (isolate Tick/South Africa/Pretoriuskop Pr4/1996) (ASFV) protein is Deoxyuridine 5'-triphosphate nucleotidohydrolase.